A 331-amino-acid polypeptide reads, in one-letter code: MMNHNQIIYTIIIGFIITLILGPLTIPFLRRLKVGQTIREEGPKTHMAKSGTPTIGGIILIMSIIITSLTSGLINEELWIALAATVAFGIIGFIDDFIKVILKRNLGLRAYQKLILQGTIAVILAIYQSRTSIMGTEVIVPFVGEGITIAGFTITQTIDLGILYIPFIVFVVVATVNSVNLTDGLDGLAAGVTLIIAAFFALVAMSWGYVSLAIFAAAITGACLGFLKFNSHPAQVFMGDTGSLALGGAIATIAVLMNVVLIIPIVGGIYFAEAVSVILQVISFKLTGKRIFKMSPLHHHYELSGWAETKVVIVFWVVTVILCLVGMLALS.

9 consecutive transmembrane segments (helical) span residues 7-27, 54-74, 78-98, 106-126, 133-153, 154-174, 195-215, 249-269, and 311-331; these read IIYT…LTIP, TIGG…SGLI, LWIA…DDFI, LGLR…ILAI, IMGT…AGFT, ITQT…VVVA, IIAA…LAIF, AIAT…VGGI, and VVIV…LALS.

The protein belongs to the glycosyltransferase 4 family. MraY subfamily. Mg(2+) serves as cofactor.

It localises to the cell membrane. It carries out the reaction UDP-N-acetyl-alpha-D-muramoyl-L-alanyl-gamma-D-glutamyl-meso-2,6-diaminopimeloyl-D-alanyl-D-alanine + di-trans,octa-cis-undecaprenyl phosphate = di-trans,octa-cis-undecaprenyl diphospho-N-acetyl-alpha-D-muramoyl-L-alanyl-D-glutamyl-meso-2,6-diaminopimeloyl-D-alanyl-D-alanine + UMP. Its pathway is cell wall biogenesis; peptidoglycan biosynthesis. Catalyzes the initial step of the lipid cycle reactions in the biosynthesis of the cell wall peptidoglycan: transfers peptidoglycan precursor phospho-MurNAc-pentapeptide from UDP-MurNAc-pentapeptide onto the lipid carrier undecaprenyl phosphate, yielding undecaprenyl-pyrophosphoryl-MurNAc-pentapeptide, known as lipid I. The protein is Phospho-N-acetylmuramoyl-pentapeptide-transferase of Alkaliphilus metalliredigens (strain QYMF).